The following is a 522-amino-acid chain: Na(+)/H(+) antiporter NhaB (522 aa).

Helical transmembrane passes span 25 to 45, 49 to 69, 87 to 107, 128 to 162, 201 to 221, 237 to 257, 302 to 322, 356 to 376, 388 to 408, 446 to 466, and 476 to 496; these read VFLVINPFIFWFHPFIAGWLL, FIFTLAMALKCYPLQPGGMLA, ILANFEVILLLMFMVAGIYFM, LSLAFCLTAAFLSAFLDALTVIAVIISVAMGFYGV, LMMHAAVGTALGGVMTLVGEP, FFFRMSPVTLLTLISGVVTCI, VFVGIWLIIGLAFHLASVGLI, LVVFFSVVAVIIDQHLFAPVI, LLLFYIFNGVLSAISDNVFVA, ATPNGQAAFLFLLTSSISPLI, and MALPYTIVLSIVGLLAVEYVL.

This sequence belongs to the NhaB Na(+)/H(+) (TC 2.A.34) antiporter family.

Its subcellular location is the cell inner membrane. It carries out the reaction 2 Na(+)(in) + 3 H(+)(out) = 2 Na(+)(out) + 3 H(+)(in). Its function is as follows. Na(+)/H(+) antiporter that extrudes sodium in exchange for external protons. This Actinobacillus succinogenes (strain ATCC 55618 / DSM 22257 / CCUG 43843 / 130Z) protein is Na(+)/H(+) antiporter NhaB.